The following is a 538-amino-acid chain: Exo-alpha-bergamotene synthase (538 aa).

Mg(2+)-binding residues include Asp-291, Asp-295, Asp-435, Thr-439, and Glu-443. The DDXXD motif motif lies at 291–295 (DDIYD).

The protein belongs to the terpene synthase family. Requires Mg(2+) as cofactor. Mn(2+) serves as cofactor.

It catalyses the reaction (2E,6E)-farnesyl diphosphate = (1S,5S,6R)-alpha-bergamotene + diphosphate. Functionally, catalyzes a mixture of sesquiterpenoids from (2E,6E)-farnesyl diphosphate. Catalyzes the formation of exo-alpha-bergamotene, as well as (E)-nerolidol, (Z)-alpha-bisabolene, (E)-beta-farnesene and beta-sesquiphellandrene. Also has activity towards geranyl diphosphate, but to a much lesser extent. The sequence is that of Exo-alpha-bergamotene synthase from Lavandula angustifolia (Lavender).